We begin with the raw amino-acid sequence, 119 residues long: NADH dehydrogenase [ubiquinone] 1 subunit C2 (119 aa).

Residues 56–75 traverse the membrane as a helical segment; that stretch reads GLHRQLLYITAFFFAGYYLV.

It belongs to the complex I NDUFC2 subunit family. In terms of assembly, complex I is composed of 45 different subunits. Interacts with TMEM242.

The protein resides in the mitochondrion inner membrane. Its function is as follows. Accessory subunit of the mitochondrial membrane respiratory chain NADH dehydrogenase (Complex I), that is believed not to be involved in catalysis but required for the complex assembly. Complex I functions in the transfer of electrons from NADH to the respiratory chain. The immediate electron acceptor for the enzyme is believed to be ubiquinone. This is NADH dehydrogenase [ubiquinone] 1 subunit C2 from Pongo pygmaeus (Bornean orangutan).